Reading from the N-terminus, the 243-residue chain is Leucyl/phenylalanyl-tRNA--protein transferase (243 aa).

The protein belongs to the L/F-transferase family.

Its subcellular location is the cytoplasm. It catalyses the reaction N-terminal L-lysyl-[protein] + L-leucyl-tRNA(Leu) = N-terminal L-leucyl-L-lysyl-[protein] + tRNA(Leu) + H(+). The catalysed reaction is N-terminal L-arginyl-[protein] + L-leucyl-tRNA(Leu) = N-terminal L-leucyl-L-arginyl-[protein] + tRNA(Leu) + H(+). It carries out the reaction L-phenylalanyl-tRNA(Phe) + an N-terminal L-alpha-aminoacyl-[protein] = an N-terminal L-phenylalanyl-L-alpha-aminoacyl-[protein] + tRNA(Phe). Its function is as follows. Functions in the N-end rule pathway of protein degradation where it conjugates Leu, Phe and, less efficiently, Met from aminoacyl-tRNAs to the N-termini of proteins containing an N-terminal arginine or lysine. This Vibrio cholerae serotype O1 (strain ATCC 39541 / Classical Ogawa 395 / O395) protein is Leucyl/phenylalanyl-tRNA--protein transferase.